The sequence spans 335 residues: MSPSATDTTEVMDPTILTLRKVLTSESEPLGRRFRALFSLKHLACLQPPTEKTLPAIQAIAAAFTSPSALLKHELAYCLGQTRNPASLPFLQQVAKDTEQDTMCRHEAAEALGALGYEDSLEILKALRDNQNEPEVIRETCDIAVDRILWENSEARKAEKLKTSDFTSIDPAPPLPMTASEPSIPEIEQTLLDTSLPLFLRYRAMFALRDLASPPDLPTATRAVEALAKGLKDPSALFRHEIAFVFGQLCHPASIPSLTEALSNQSEAGMVRHEAAEALGSLGDYEGVEETLRKFLNDPEQVVRDSVIVALDMAEYEKNGEVEYALVPDAGVAAA.

5 HEAT-like PBS-type repeats span residues 71–97, 104–130, 200–233, 238–264, and 271–298; these read LKHELAYCLGQTRNPASLPFLQQVAKD, CRHEAAEALGALGYEDSLEILKALRDN, LRYRAMFALRDLASPPDLPTATRAVEALAKGLKD, FRHEIAFVFGQLCHPASIPSLTEALSN, and VRHEAAEALGSLGDYEGVEETLRKFLND. Fe cation contacts are provided by H73, E74, H106, and E107. Positions 240, 241, 273, and 274 each coordinate Fe cation.

Belongs to the deoxyhypusine hydroxylase family. Fe(2+) is required as a cofactor.

Its subcellular location is the cytoplasm. The protein localises to the nucleus. It carries out the reaction [eIF5A protein]-deoxyhypusine + AH2 + O2 = [eIF5A protein]-hypusine + A + H2O. Its pathway is protein modification; eIF5A hypusination. In terms of biological role, catalyzes the hydroxylation of the N(6)-(4-aminobutyl)-L-lysine intermediate to form hypusine, an essential post-translational modification only found in mature eIF-5A factor. The chain is Deoxyhypusine hydroxylase (lia1) from Aspergillus fumigatus (strain ATCC MYA-4609 / CBS 101355 / FGSC A1100 / Af293) (Neosartorya fumigata).